The primary structure comprises 410 residues: MKIYLVGGAVRDALLGQPAGDRDWVVVGADQAQMQALGYKPVGKDFPVFLHPRSGEEYALARTERKSGRGYRGFVVDADPSVTLEEDLLRRDFTINAIARDEASGEVFDPYGGVRDLQQRVLRHVGPAFVEDPVRVLRAARFMARLAPLGFGIAPETAALMREMADSGELDSLVPERVWQELRRVLGSAQPSAFLRTLHDTGALRAILPELDALYGVPQRAEFHPEVDTGVHQEMVSDMAARLAPGDALVGFAALTHDLGKALTPPEQWPRHVMHEQRGVAPLQALCERLKVPQDYRQLAVTACREHLNVHRLPELRDRTVHELLVRCDGFRRPERIAQLALVCEADKRGRLGSEEAAYPQGPELQRVHAAALAINARDLAADGLQGPQIGEALASARIAAIAQARSLRQ.

Positions 8 and 11 each coordinate ATP. Residues G8 and R11 each coordinate CTP. Mg(2+) is bound by residues D21 and D23. Positions 91, 138, and 141 each coordinate ATP. Positions 91, 138, and 141 each coordinate CTP. Residues T229–D347 form the HD domain.

This sequence belongs to the tRNA nucleotidyltransferase/poly(A) polymerase family. Bacterial CCA-adding enzyme type 1 subfamily. In terms of assembly, monomer. Can also form homodimers and oligomers. Mg(2+) serves as cofactor. The cofactor is Ni(2+).

The enzyme catalyses a tRNA precursor + 2 CTP + ATP = a tRNA with a 3' CCA end + 3 diphosphate. It catalyses the reaction a tRNA with a 3' CCA end + 2 CTP + ATP = a tRNA with a 3' CCACCA end + 3 diphosphate. In terms of biological role, catalyzes the addition and repair of the essential 3'-terminal CCA sequence in tRNAs without using a nucleic acid template. Adds these three nucleotides in the order of C, C, and A to the tRNA nucleotide-73, using CTP and ATP as substrates and producing inorganic pyrophosphate. tRNA 3'-terminal CCA addition is required both for tRNA processing and repair. Also involved in tRNA surveillance by mediating tandem CCA addition to generate a CCACCA at the 3' terminus of unstable tRNAs. While stable tRNAs receive only 3'-terminal CCA, unstable tRNAs are marked with CCACCA and rapidly degraded. This is Multifunctional CCA protein from Xanthomonas campestris pv. campestris (strain B100).